Here is a 156-residue protein sequence, read N- to C-terminus: Succinate dehydrogenase assembly factor 2-B, mitochondrial (156 aa).

The transit peptide at 1-12 (MLRQILSSAVAK) directs the protein to the mitochondrion.

Belongs to the SDHAF2 family. Interacts with the flavoprotein subunit within the SDH catalytic dimer.

The protein localises to the mitochondrion matrix. Functionally, plays an essential role in the assembly of succinate dehydrogenase (SDH), an enzyme complex (also referred to as respiratory complex II) that is a component of both the tricarboxylic acid (TCA) cycle and the mitochondrial electron transport chain, and which couples the oxidation of succinate to fumarate with the reduction of ubiquinone (coenzyme Q) to ubiquinol. Required for flavinylation (covalent attachment of FAD) of the flavoprotein subunit of the SDH catalytic dimer. The sequence is that of Succinate dehydrogenase assembly factor 2-B, mitochondrial from Drosophila willistoni (Fruit fly).